A 505-amino-acid chain; its full sequence is Olfactomedin-4 (505 aa).

The signal sequence occupies residues 1-18 (MSYSLLFLLALQFCLGSA). 2 N-linked (GlcNAc...) asparagine glycosylation sites follow: asparagine 64 and asparagine 128. Positions 174-225 (HIIDMLEVEIRNMTLLVEKLESLDQNNVLSIRRQILALKTKLKECEASKSDL) form a coiled coil. Positions 237–499 (SCSHGGVVNI…LLNYDLVFLQ (263 aa)) constitute an Olfactomedin-like domain. Cysteine 238 and cysteine 429 are oxidised to a cystine.

As to quaternary structure, homomultimer; disulfide-linked. Interacts with NDUFA13. Interacts with cell surface lectins (locutions ricinus communis agglutinin I, concanavalin A and wheat germ agglutinin) and cadherin. Post-translationally, N-glycosylated.

Its subcellular location is the secreted. It is found in the extracellular space. The protein localises to the mitochondrion. May promote proliferation of pancreatic cancer cells by favoring the transition from the S to G2/M phase. In myeloid leukemic cell lines, inhibits cell growth and induces cell differentiation and apoptosis. May play a role in the inhibition of EIF4EBP1 phosphorylation/deactivation. Facilitates cell adhesion, most probably through interaction with cell surface lectins and cadherin. The sequence is that of Olfactomedin-4 (Olfm4) from Mus musculus (Mouse).